We begin with the raw amino-acid sequence, 238 residues long: Aspartate/glutamate leucyltransferase (238 aa).

This sequence belongs to the R-transferase family. Bpt subfamily.

It localises to the cytoplasm. It catalyses the reaction N-terminal L-glutamyl-[protein] + L-leucyl-tRNA(Leu) = N-terminal L-leucyl-L-glutamyl-[protein] + tRNA(Leu) + H(+). The catalysed reaction is N-terminal L-aspartyl-[protein] + L-leucyl-tRNA(Leu) = N-terminal L-leucyl-L-aspartyl-[protein] + tRNA(Leu) + H(+). Its function is as follows. Functions in the N-end rule pathway of protein degradation where it conjugates Leu from its aminoacyl-tRNA to the N-termini of proteins containing an N-terminal aspartate or glutamate. In Nitrosococcus oceani (strain ATCC 19707 / BCRC 17464 / JCM 30415 / NCIMB 11848 / C-107), this protein is Aspartate/glutamate leucyltransferase.